Consider the following 578-residue polypeptide: Matrix metalloproteinase-17 (578 aa).

Disordered regions lie at residues 1 to 22 (MGRR…PGPG) and 107 to 133 (PRCS…TKWS). Positions 1–39 (MGRRPRGPGSPRGPGPPRPGPGLPPLLLVLALAAHGGCA) are cleaved as a signal peptide. The segment covering 11–22 (PRGPGPPRPGPG) has biased composition (pro residues). Residues 40–124 (APAPRAEDLS…PPGAQSRRKR (85 aa)) constitute a propeptide that is removed on maturation. Residues 107-114 (PRCSLPDL) carry the Cysteine switch motif. Zn(2+) is bound at residue Cys109. N-linked (GlcNAc...) asparagine glycosylation is present at Asn136. His247 serves as a coordination point for Zn(2+). Residue Glu248 is part of the active site. Zn(2+) contacts are provided by His251 and His257. A disordered region spans residues 301 to 334 (PTAQLDTPEPEEPPLLPEPPNNRSSTPPQKDVPH). An N-linked (GlcNAc...) asparagine glycan is attached at Asn322. Hemopexin repeat units lie at residues 333-382 (PHRC…WRGL), 386-432 (LDSV…SLPP), 436-479 (DAVF…WRGV), and 480-527 (PSML…WLVC). A disulfide bond links Cys336 and Cys527. Ser558 is lipidated: GPI-anchor amidated serine. A propeptide spans 559-578 (DAHRLALPSLLLLTPLLWGL) (removed in mature form).

Belongs to the peptidase M10A family. Zn(2+) is required as a cofactor. Ca(2+) serves as cofactor. In terms of processing, the precursor is cleaved by a furin endopeptidase. Expressed by monocytes and macrophages.

The protein resides in the cell membrane. The protein localises to the secreted. Its subcellular location is the extracellular space. It is found in the extracellular matrix. Its function is as follows. Endopeptidase that degrades various components of the extracellular matrix, such as fibrin. May be involved in the activation of membrane-bound precursors of growth factors or inflammatory mediators, such as tumor necrosis factor-alpha. May also be involved in tumoral process. Not obvious if able to proteolytically activate progelatinase A. Does not hydrolyze collagen types I, II, III, IV and V, gelatin, fibronectin, laminin, decorin nor alpha1-antitrypsin. This is Matrix metalloproteinase-17 (Mmp17) from Mus musculus (Mouse).